Here is a 600-residue protein sequence, read N- to C-terminus: Adenine deaminase 3 (600 aa).

The protein belongs to the metallo-dependent hydrolases superfamily. Adenine deaminase family. Requires Mn(2+) as cofactor.

The catalysed reaction is adenine + H2O + H(+) = hypoxanthine + NH4(+). This chain is Adenine deaminase 3, found in Rhizobium johnstonii (strain DSM 114642 / LMG 32736 / 3841) (Rhizobium leguminosarum bv. viciae).